The following is a 124-amino-acid chain: V-type proton ATPase subunit F 1 (124 aa).

The protein belongs to the V-ATPase F subunit family. In terms of assembly, V-ATPase is a heteromultimeric enzyme made up of two complexes: the ATP-hydrolytic V1 complex and the proton translocation V0 complex. The V1 complex consists of three catalytic AB heterodimers that form a heterohexamer, three peripheral stalks each consisting of EG heterodimers, one central rotor including subunits D and F, and the regulatory subunits C and H. The proton translocation complex V0 consists of the proton transport subunit a, a ring of proteolipid subunits c9c'', rotary subunit d, subunits e and f, and the accessory subunits VhaAC45 and ATP6AP2.

Functionally, subunit of the V1 complex of vacuolar(H+)-ATPase (V-ATPase), a multisubunit enzyme composed of a peripheral complex (V1) that hydrolyzes ATP and a membrane integral complex (V0) that translocates protons. V-ATPase is responsible for acidifying and maintaining the pH of intracellular compartments and in some cell types, is targeted to the plasma membrane, where it is responsible for acidifying the extracellular environment. The chain is V-type proton ATPase subunit F 1 (Vha14) from Drosophila pseudoobscura pseudoobscura (Fruit fly).